Reading from the N-terminus, the 348-residue chain is Protein pelota homolog (348 aa).

It belongs to the eukaryotic release factor 1 family. Pelota subfamily. In terms of assembly, monomer. It depends on a divalent metal cation as a cofactor.

It is found in the cytoplasm. In terms of biological role, may function in recognizing stalled ribosomes, interact with stem-loop structures in stalled mRNA molecules, and effect endonucleolytic cleavage of the mRNA. May play a role in the release non-functional ribosomes and degradation of damaged mRNAs. Has endoribonuclease activity. This chain is Protein pelota homolog, found in Methanococcus maripaludis (strain C5 / ATCC BAA-1333).